Reading from the N-terminus, the 308-residue chain is Cell division protein FtsX (308 aa).

Residues 1 to 24 (MISRFFRHLFEALKSLKRNGWMTV) are Cytoplasmic-facing. The helical transmembrane segment at 25–45 (AAVSSVMITLTLVAIFASVIF) threads the bilayer. The Extracellular portion of the chain corresponds to 46 to 178 (NTAKLATDIE…NTERLFKLAS (133 aa)). The helical transmembrane segment at 179 to 199 (FIRVWGLGIAALLIFIAVFLI) threads the bilayer. At 200–236 (SNTIRITIISRSREIQIMRLVGAKNSYIRGPFLLEGA) the chain is on the cytoplasmic side. The chain crosses the membrane as a helical span at residues 237–257 (FIGLLGAIAPSVLVFIVYQIV). Residues 258-276 (YQSVNKSLVGQNLSMISPD) are Extracellular-facing. Residues 277–297 (LFSPLMIALLFVIGVFIGSLG) traverse the membrane as a helical segment. The Cytoplasmic portion of the chain corresponds to 298–308 (SGISMRRFLKI).

It belongs to the ABC-4 integral membrane protein family. FtsX subfamily. Homodimer. Interacts with FtsE; forms a membrane-associated complex. Interacts (via large extracellular loop) with PcsB (via N-terminal coiled-coil domain). This interaction directs PcsB to equatorial and septal sites of dividing cells.

The protein localises to the cell membrane. Functionally, part of the ABC transporter FtsEX involved in asymmetric cellular division facilitating the initiation of sporulation. Required in maintaining normal growth and cellular morphology. This Streptococcus pneumoniae serotype 2 (strain D39 / NCTC 7466) protein is Cell division protein FtsX.